We begin with the raw amino-acid sequence, 165 residues long: Type 3 secretion system regulator YopR (165 aa).

It belongs to the YopR family.

The protein localises to the secreted. May be involved in the regulation of the assembly of the type III secretion system (T3SS), also called injectisome, which is used to inject bacterial effector proteins into eukaryotic host cells. May control the secretion and/or polymerization of YscF/SctF, the principal component of the needle filament, thereby impacting the assembly of the T3SS. Involved in pathogenesis. This chain is Type 3 secretion system regulator YopR, found in Yersinia pestis.